Here is a 454-residue protein sequence, read N- to C-terminus: Epoxide hydrolase 1 (454 aa).

The chain crosses the membrane as a helical span at residues 1–21 (MWLEILLASVLGFVIYWFVSK). The Cytoplasmic segment spans residues 22 to 454 (DKEETLLLGD…RKFMGLLEQQ (433 aa)). Asp226 (nucleophile) is an active-site residue. Residue Arg294 is modified to Dimethylated arginine. The active-site Proton donor is Tyr373. The active-site Proton acceptor is His430.

Belongs to the peptidase S33 family.

Its subcellular location is the microsome membrane. The protein resides in the endoplasmic reticulum membrane. The catalysed reaction is cis-stilbene oxide + H2O = (1R,2R)-hydrobenzoin. It carries out the reaction 1-(4-methoxyphenyl)-N-methyl-N-[(3-methyloxetan-3-yl)methyl]methanamine + H2O = 2-{[(4-methoxybenzyl)(methyl)amino]methyl}-2-methylpropane-1,3-diol. The enzyme catalyses 8,9-epoxy-(5Z,11Z,14Z)-eicosatrienoate + H2O = 8,9-dihydroxy-(5Z,11Z,14Z)-eicosatrienoate. It catalyses the reaction 11,12-epoxy-(5Z,8Z,14Z)-eicosatrienoate + H2O = 11,12-dihydroxy-(5Z,8Z,14Z)-eicosatrienoate. The catalysed reaction is 2-(5Z,8Z,11Z,14Z-eicosatetraenoyl)-glycerol + H2O = glycerol + (5Z,8Z,11Z,14Z)-eicosatetraenoate + H(+). With respect to regulation, inhibited by 10-hydroxystearamide and methoxy-arachidonyl fluorophosphate. Its function is as follows. Biotransformation enzyme that catalyzes the hydrolysis of arene and aliphatic epoxides to less reactive and more water soluble dihydrodiols by the trans addition of water. May play a role in the metabolism of endogenous lipids such as epoxide-containing fatty acids. Metabolizes the abundant endocannabinoid 2-arachidonoylglycerol (2-AG) to free arachidonic acid (AA) and glycerol. Binds 20(S)-hydroxycholesterol (20(S)-OHC). The polypeptide is Epoxide hydrolase 1 (EPHX1) (Sus scrofa (Pig)).